We begin with the raw amino-acid sequence, 217 residues long: MNQTLLSSFGTPFERVENALAALREGRGVMVLDDEDRENEGDMIFPAETMTIEQMALTIRHGSGIVCLCITEDRRKQLDLPMMVENNTSAYGTGFTVTIEAAEGVTTGVSAADRITTVRAAIADGAKPSDLNRPGHVFPLRAQAGGVLTRGGHTEATIDLMTLAGFKPAGVLCELTNDDGTMARAPECIEFANKHNMALVTIEDLVAYRQAHERKAS.

D-ribulose 5-phosphate contacts are provided by residues 37–38, D42, 150–154, and E174; these read RE and RGGHT. Mg(2+) is bound at residue E38. Position 153 (H153) interacts with Mg(2+).

It belongs to the DHBP synthase family. As to quaternary structure, homodimer. Requires Mg(2+) as cofactor. Mn(2+) is required as a cofactor.

It carries out the reaction D-ribulose 5-phosphate = (2S)-2-hydroxy-3-oxobutyl phosphate + formate + H(+). The protein operates within cofactor biosynthesis; riboflavin biosynthesis; 2-hydroxy-3-oxobutyl phosphate from D-ribulose 5-phosphate: step 1/1. In terms of biological role, catalyzes the conversion of D-ribulose 5-phosphate to formate and 3,4-dihydroxy-2-butanone 4-phosphate. This chain is 3,4-dihydroxy-2-butanone 4-phosphate synthase, found in Escherichia fergusonii (strain ATCC 35469 / DSM 13698 / CCUG 18766 / IAM 14443 / JCM 21226 / LMG 7866 / NBRC 102419 / NCTC 12128 / CDC 0568-73).